A 561-amino-acid chain; its full sequence is Putative transport protein YbjL (561 aa).

Helical transmembrane passes span 8–28, 32–52, 66–86, 94–114, and 158–178; these read LLNG…LCLG, LGSI…LLGQ, FMLF…SIFF, MLAL…GKLF, and NLSL…IVGA. RCK C-terminal domains are found at residues 200–288 and 292–373; these read RGLD…SFRN and VFDR…RIGF. A run of 5 helical transmembrane segments spans residues 383-403, 406-426, 447-467, 475-495, and 540-560; these read LLAF…TFQF, FSFG…LGFL, FGLM…ISNG, MLIA…LFGA, and AIAN…WPGL.

This sequence belongs to the AAE transporter (TC 2.A.81) family. YbjL subfamily.

Its subcellular location is the cell membrane. The chain is Putative transport protein YbjL from Salmonella arizonae (strain ATCC BAA-731 / CDC346-86 / RSK2980).